We begin with the raw amino-acid sequence, 304 residues long: Mas-related G-protein coupled receptor member A1 (304 aa).

Residues 1-17 (MDNTIPGGINITILIPN) lie on the Extracellular side of the membrane. N-linked (GlcNAc...) asparagine glycosylation is present at N10. The chain crosses the membrane as a helical span at residues 18-38 (LMIIIFGLVGLTGNGIVFWLL). At 39–53 (GFCLHRNAFSVYILN) the chain is on the cytoplasmic side. A helical transmembrane segment spans residues 54-74 (LALADFFFLLGHIIDSILLLL). N75 is a topological domain (extracellular). A helical membrane pass occupies residues 76 to 96 (VFYPITFLLCFYTIMMVLYIA). The Cytoplasmic portion of the chain corresponds to 97 to 131 (GLSMLSAISTERCLSVLCPIWYHCHRPEHTSTVMC). The chain crosses the membrane as a helical span at residues 132-152 (AVIWVLSLLICILNSYFCGFL). Residues 153–166 (NTQYKNENGCLALN) are Extracellular-facing. Residues 167–187 (FFTAAYLMFLFVVLCLSSLAL) form a helical membrane-spanning segment. The Cytoplasmic portion of the chain corresponds to 188–206 (VARLFCGTGQIKLTRLYVT). A helical membrane pass occupies residues 207–227 (IILSILVFLLCGLPFGIHWFL). Residues 228–243 (LFKIKDDFHVFDLGFY) are Extracellular-facing. The chain crosses the membrane as a helical span at residues 244–264 (LASVVLTAINSCANPIIYFFV). Residues 265-304 (GSFRHRLKHQTLKMVLQNALQDTPETAKIMVEMSRSKSEP) lie on the Cytoplasmic side of the membrane.

The protein belongs to the G-protein coupled receptor 1 family. Mas subfamily. Expressed in a subset of sensory neurons that includes nociceptors. Expressed in the subclass of non-peptidergic sensory neurons that are IB4(+) and VR1(-).

It localises to the cell membrane. In terms of biological role, orphan receptor activated by a subset of RFamide-family neuropeptides such as FLRF-amide and FMRF-amide. Mediates its action by association with G proteins that activate a phosphatidylinositol-calcium second messenger system. Its effect is mediated by G(q) and G(11) proteins. May regulate the function of nociceptive neurons by modulation of pain perception. The protein is Mas-related G-protein coupled receptor member A1 (Mrgpra1) of Mus musculus (Mouse).